Consider the following 142-residue polypeptide: Galactose-6-phosphate isomerase subunit LacA (142 aa).

It belongs to the LacAB/RpiB family. In terms of assembly, heteromultimeric protein consisting of LacA and LacB.

It carries out the reaction aldehydo-D-galactose 6-phosphate = keto-D-tagatose 6-phosphate. It functions in the pathway carbohydrate metabolism; D-galactose 6-phosphate degradation; D-tagatose 6-phosphate from D-galactose 6-phosphate: step 1/1. This is Galactose-6-phosphate isomerase subunit LacA from Staphylococcus epidermidis (strain ATCC 35984 / DSM 28319 / BCRC 17069 / CCUG 31568 / BM 3577 / RP62A).